A 473-amino-acid polypeptide reads, in one-letter code: ATP synthase subunit beta (473 aa).

Residue 158 to 165 participates in ATP binding; the sequence is GGAGVGKT.

The protein belongs to the ATPase alpha/beta chains family. In terms of assembly, F-type ATPases have 2 components, CF(1) - the catalytic core - and CF(0) - the membrane proton channel. CF(1) has five subunits: alpha(3), beta(3), gamma(1), delta(1), epsilon(1). CF(0) has three main subunits: a(1), b(2) and c(9-12). The alpha and beta chains form an alternating ring which encloses part of the gamma chain. CF(1) is attached to CF(0) by a central stalk formed by the gamma and epsilon chains, while a peripheral stalk is formed by the delta and b chains.

Its subcellular location is the cell membrane. The catalysed reaction is ATP + H2O + 4 H(+)(in) = ADP + phosphate + 5 H(+)(out). In terms of biological role, produces ATP from ADP in the presence of a proton gradient across the membrane. The catalytic sites are hosted primarily by the beta subunits. In Geobacillus thermodenitrificans (strain NG80-2), this protein is ATP synthase subunit beta.